Consider the following 364-residue polypeptide: Trans-enoyl reductase traG (364 aa).

Residue 51 to 54 (VDAK) participates in NADP(+) binding. 136 to 143 (LGLFTAGL) contributes to the substrate binding site. NADP(+) is bound by residues 176–179 (STAT), 199–202 (SKAN), Y217, and 264–265 (LE). 286–290 (ALTVF) contacts substrate. 355 to 356 (MS) provides a ligand contact to NADP(+).

Belongs to the zinc-containing alcohol dehydrogenase family. In terms of assembly, monomer.

Its pathway is secondary metabolite biosynthesis. Trans-enoyl reductase; part of the tra gene cluster that produces terrestric acid. The clavatol biosynthesis cluster cla and the terrestric acid cluster tra are both involved in the production of peniphenones and penilactones. The non-reducing PKS claF is responsible for the formation of clavatol from successive condensations of 3 malonyl-CoA units, presumably with a simple acetyl-CoA starter unit, and 2 methylation steps. The esterase claE probably collaborates with claF by catalyzing the hydrolysis of ACP-bound acyl intermediates to free the ACP from stalled intermediates. The clavatol oxidase claD then converts clavatol to hydroxyclavatol. Spontaneous dehydration of hydroxyclavatol leads to the accumulation of the highly active ortho-quinone methide. On the other hand, the PKS-NRPS hybrid traA is involved in the formation of crustosic acid, with the help of traB and traD. The polyketide synthase module (PKS) of traA is responsible for the synthesis of the polyketide backbone via the condensation of an acetyl-CoA starter unit with 3 malonyl-CoA units. The downstream nonribosomal peptide synthetase (NRPS) module then amidates the carboxyl end of the polyketide with L-malic acid. Because traA lacks a designated enoylreductase (ER) domain, the required activity is provided the enoyl reductase traG. Crustosic acid undergoes decarboxylation and isomerization to the terrestric acid, catalyzed by the 2-oxoglutarate-dependent dioxygenase traH. Both acids are further converted to the 2 gamma-butyrolactones (R)-5-methyltetronic acid and (S)-5-carboxylmethyltetronic acid, with involvement of the cytochrome P450 monooxygenase claJ. Spontaneous addition of the methide to these gamma-butyrolactones leads to peniphenone D and penilactone D, which undergo again stereospecific attacking by methide to give penilactones A and B. The chain is Trans-enoyl reductase traG from Penicillium crustosum (Blue mold fungus).